The following is a 165-amino-acid chain: Small ribosomal subunit protein uS17c (165 aa).

A chloroplast-targeting transit peptide spans 1–57; the sequence is MSLSFSLLKPPLSSSNPNPFLHGTTTKLSLLPSFSALSLSSSPPSSSTTYTFPVIKA. The interval 128–165 is disordered; it reads AVAPEGRQSSATRPKPIQAASDELGIPLESQVEGDKTV.

Component of the chloroplast small ribosomal subunit (SSU). Mature 70S chloroplast ribosomes of higher plants consist of a small (30S) and a large (50S) subunit. The 30S small subunit contains 1 molecule of ribosomal RNA (16S rRNA) and 24 different proteins. The 50S large subunit contains 3 rRNA molecules (23S, 5S and 4.5S rRNA) and 33 different proteins.

It is found in the plastid. It localises to the chloroplast. In terms of biological role, component of the chloroplast ribosome (chloro-ribosome), a dedicated translation machinery responsible for the synthesis of chloroplast genome-encoded proteins, including proteins of the transcription and translation machinery and components of the photosynthetic apparatus. This Spinacia oleracea (Spinach) protein is Small ribosomal subunit protein uS17c (RPS17).